The following is a 2258-amino-acid chain: MAPGEIIIFELCQAVQEFLLLYNKETVSLHEEMIKRLNTNINRVNSSDDINNNNNNNNDDDDDNDDYDDSDDENSDSDYDDYDDSDDENSDDEFYSDDEDYNTRHQMGDIGSSVNKIINSIDHTISHGGGVGVGIGSGNGLFSKSSSSSSPMIPYNFSFDSLNGFDPDIIFEDSFQTPLKGSSSIDFEEMNNLTNSNNSNSTATTTTTTTTNNNNNNNTNNNNNNNSNNNNNNNNNNNNTNNNTNNNNNNNNNNNNNNNNNNNNNNNNNNNSNNNNNISNNKINKINNNNNNKELIDNNNNNKDKENDLINDTIPKIKWKKGSCIERKSNYSVYRGVDEDTDRKLICKIVNLNIDDRSSSSLTSLSNSNNNNSNNNNNNNNNNNNNNNNNNNNNNNNNLSIDVVELKKRLIEKVKMIQKEIESMKYLGNPYIIKYLGTNFQEGQNTLYIFQEYNSTLTLQQKILSNGIGFEESQVKKFTYQLLLGLLYLHSQHIPHRDFKSHNIFFNQSTSKMLLSNYGGRNIKIFDHFEKLNSLKNLNSWISSTNNSINNINNINNNNNNNNNNINTTTTQNQINNEIDRREDIINLGIVVLEMLCGSDLANNQTVLIYLAQLNLLNNQQQNQNFIQPPPLQYQLQQQYDLIKEIEQKTHPSSPISNNAKDFLSLCFTINGNGSTNDSLEAGILLKHPFLASNSNSTPPPSNFLNFTNNIKFLDQRSAATQALLSSPHSLIPQPIQTLIKSQTPNNNNDNNNLASSNELLSSSNGSNIDLRSTNSSIVSNPLATSSSLDNITPPPSRPISPKPSPLNKRNQKLQTSQQKPPLSPPQTPLKQIPQSPQSPPQQNFNTPPTTTTTTTTPTATPTTPTMTPLTPIQKQQQIDYDMFRYHSRYRTDFEEIEMIGKGGFGVVVKSRNKLDCRYYAIKKIKTKGYTDSNQEPLTNKLLREVTTLSRLHHQFVVRYYQAWIEKSCDSFQSLEEGNEDLSGDLETDASEDWFMQSSINSRSIISRDSYSGLSTSNSNVGGVNNTAGGGDSVSNANSNKSMIVGNSNKKLTLSSSNTSSSSSLLSNNKSKILNTSKSTSTNTSTSTSTSNTNKNKKISKKKKSKLSPLMKPKNKKNKNNGESEQSSSDSENGENGMKSRIIENASDSYSDDDNNNNNNNDNNNNYHSDNESDSFSGSISMSDGNGSGYEATDDEDIINNSGSFDENENDDDDEEDDDDEYDEEDDDYETFDFQDKSRVVSNNSKLSTSSSRKKPPKETHTLYIQMEYCSKKTLKTLIDNVGGIAEEEAFRLLRQIVEGLNHIHSQQIIHRDLKPANIFIDNEQNVKIGDFGLATSGAPVSKSDDLNSSTSNTANNINLSSSTNSTAQQTPMWDLNDENLSMTGGVGTPFYCCPEILEKNTKHYGTKVDMYSLGIIFFEMCFQFQTQMERSNILRDLRDNLKFPPGFESTKPDQTQIIRSLLSRDPTQRPSTKQLLESGLLPSKMEDDILKEAIKTIANPTISLFSYLMEKLFCLSNDEHIMSRYLYTSNPSLTPMHLICREKTFSRLEKIFLNHGSIRIDTPTLFPKNPTNSTHPGAANVAKFLDESGTVVYLPYDLTIPWARHVVIHNIQQAKRYTFSKVYRRSQPGFSPKELYECDFDIIGPSKSRHISDAETLRIIIEIMEEFKDELFGNNSGSNSGSGSGGSINYKIRINHYGLLDSILSECGVEKRFFTVVYQTVAQLHWRLNWAQVAQSLKEHGLSASIVSNISTYFRQRGELAQCVTQLESLLANHKEATTGISDLKILVRNLQMINIIPRFLLDLSLIHNHQYYEGLVFQAYIERPTLSNPSRTEIIMSGGRYDKLIKSLHPNPSLSNNIVSGVGVTLACEKIVNSVLNYRQHLLNNCFNTTYTRRNKDPPNSNNNPNNNNLNNNVSIFTKFQSHIEVFVCSLGSSLLGEKLQVASQLWSAGIKADYSQTDYYSSEDIYSNCRENGIPWVVILREKAFQIGKLKVKQIETRQERTVARKDLVDFFLKSRKHNVDSKNIIQNTSSSDLSNLIGGINNSGSGGSGGSGGGSSMSSGGGGGGNSNIGGSDHHHHGHHSNQSTSSSGNSNNSNTQQTSPIQHHVHFSNTKSIIGSSGIISNATFSGGSSSSSNIIHFDEPTDSFSTQIVYQGVEEIKKSKIETLVQTSLSKLFRGFIQSKSSTIRVIVTDLAYSVIRDLQISESHDNISKFQRVSKEKLLQLKNQIFKWKVYPFIVIHSIKDDKSVIFNSVV.

Disordered stretches follow at residues 43–108 (RVNS…HQMG) and 189–308 (EMNN…KEND). The span at 45–57 (NSSDDINNNNNNN) shows a compositional bias: low complexity. The span at 58–100 (NDDDDDNDDYDDSDDENSDSDYDDYDDSDDENSDDEFYSDDED) shows a compositional bias: acidic residues. The span at 191–301 (NNLTNSNNSN…NKELIDNNNN (111 aa)) shows a compositional bias: low complexity. Positions 273 to 309 (NNNNNISNNKINKINNNNNNKELIDNNNNNKDKENDL) form a coiled coil. Positions 319 to 691 (WKKGSCIERK…AGILLKHPFL (373 aa)) constitute a Protein kinase 1 domain. Residues 325–333 (IERKSNYSV) and Lys-348 each bind ATP. The segment at 358–398 (SSSSLTSLSNSNNNNSNNNNNNNNNNNNNNNNNNNNNNNNN) is disordered. Residues 359 to 398 (SSSLTSLSNSNNNNSNNNNNNNNNNNNNNNNNNNNNNNNN) are compositionally biased toward low complexity. Asp-498 serves as the catalytic Proton acceptor. Disordered regions lie at residues 741 to 768 (KSQT…NGSN) and 782 to 870 (PLAT…MTPL). Over residues 746–768 (NNNNDNNNLASSNELLSSSNGSN) the composition is skewed to low complexity. Residues 782 to 791 (PLATSSSLDN) show a composition bias toward polar residues. A compositionally biased stretch (pro residues) spans 793–805 (TPPPSRPISPKPS). Over residues 841–870 (PQQNFNTPPTTTTTTTTPTATPTTPTMTPL) the composition is skewed to low complexity. The region spanning 894–1482 (FEEIEMIGKG…TKQLLESGLL (589 aa)) is the Protein kinase 2 domain. ATP is bound by residues 900-908 (IGKGGFGVV) and Lys-923. Positions 1053–1094 (TLSSSNTSSSSSLLSNNKSKILNTSKSTSTNTSTSTSTSNTN) are enriched in low complexity. Residues 1053-1259 (TLSSSNTSSS…SSSRKKPPKE (207 aa)) form a disordered region. Residues 1095 to 1106 (KNKKISKKKKSK) are compositionally biased toward basic residues. The span at 1156 to 1185 (NNNNNNDNNNNYHSDNESDSFSGSISMSDG) shows a compositional bias: low complexity. Over residues 1206-1233 (DENENDDDDEEDDDDEYDEEDDDYETFD) the composition is skewed to acidic residues. A compositionally biased stretch (low complexity) spans 1242–1251 (SNNSKLSTSS). Asp-1313 acts as the Proton acceptor in catalysis. Disordered regions lie at residues 1343–1370 (KSDD…TAQQ) and 2048–2104 (GSGG…QQTS). The segment covering 1347-1368 (LNSSTSNTANNINLSSSTNSTA) has biased composition (low complexity). Positions 2048–2072 (GSGGSGGSGGGSSMSSGGGGGGNSN) are enriched in gly residues. The span at 2085 to 2099 (SNQSTSSSGNSNNSN) shows a compositional bias: low complexity.

The protein belongs to the protein kinase superfamily. Ser/Thr protein kinase family.

The catalysed reaction is L-seryl-[protein] + ATP = O-phospho-L-seryl-[protein] + ADP + H(+). The enzyme catalyses L-threonyl-[protein] + ATP = O-phospho-L-threonyl-[protein] + ADP + H(+). Phosphorylates eIF2-alpha, from 1 to 7 hours after the onset of development or during the preaggregation state, resulting in a shift from polysomes to free ribosomes for bulk mRNA. The sequence is that of Probable serine/threonine-protein kinase ifkA (ifkA) from Dictyostelium discoideum (Social amoeba).